The following is a 174-amino-acid chain: Anthrone oxygenase CPUR_05435 (174 aa).

4 helical membrane passes run 13–33, 56–76, 88–108, and 140–160; these read VALA…AIMI, YGSV…GFAS, CLAA…AMIP, and WVVL…MGFT.

The protein belongs to the anthrone oxygenase family.

Its subcellular location is the membrane. The enzyme catalyses emodin anthrone + O2 = emodin + H2O + H(+). In terms of biological role, anthrone oxygenase; part of the ergochrome gene cluster responsible for the typical purple-black color of the ergot sclerotia. The ergochrome gene cluster produces several ergot pigments including the yellow ergochrome secalonic acid and its derivatives, as well as the red anthraquinones endocrocin and clavorubin. The pathway begins with the synthesis of atrochrysone thioester by the polyketide synthase (PKS) CPUR_05437. The atrochrysone carboxyl ACP thioesterase CPUR_05436 then breaks the thioester bond and releases the atrochrysone carboxylic acid from CPUR_05437. The decarboxylase CPUR_05434 then catalyzes the concerted decarboxylation-elimination required to convert atochrysone carboxylic acid into emodin anthrone, which is further oxidized to emodin by the anthrone oxygenase CPUR_05435. Emodin is further modified to yield monodictyphenone via several steps involving CPUR_05427, CPUR_05428, CPUR_05429 and CPUR_05430. The short chain dehydrogenase/reductase CPUR_05418 then catalyzes the C-5 ketoreduction to give the xanthone skeleton of the monomeric units. Ergochromes formation requires further dimerization steps of different xanthone units, probably catalyzed by the cytochrome P450 monooxygenase CPUR_05419. CPUR_05425, CPUR_05426 and CPUR_05431 are unique to Claviceps, thus it is likely that they are involved in further modification of xanthone units or in their dimerization. The yellow ergochromes and the red anthraquinone pigments endocrocin and clavorubin are products from the same PKS derived precursors and the latter are likely shunt products in the pathway of xanthone biosynthesis. It is proposed that atrochrysone carboxylic acid released from the PKS CPUR_05437 can also be converted to endocrocin anthrone which is further oxidized into endocrocin by CPUR_05435. Endocrocin could be then modified to clavorubin, possibly by CPUR_05423 and CPUR_05431. Clavorubin is the principal anthraquinone metabolite produced by the cluster with a much higher yield compared to endocrocin. The polypeptide is Anthrone oxygenase CPUR_05435 (Claviceps purpurea (strain 20.1) (Ergot fungus)).